Consider the following 302-residue polypeptide: Nucleotide-binding protein Rsph17029_0317 (302 aa).

An ATP-binding site is contributed by 15-22 (GPSGAGRT). Residue 62–65 (DVRN) coordinates GTP.

The protein belongs to the RapZ-like family.

Displays ATPase and GTPase activities. This chain is Nucleotide-binding protein Rsph17029_0317, found in Cereibacter sphaeroides (strain ATCC 17029 / ATH 2.4.9) (Rhodobacter sphaeroides).